Consider the following 340-residue polypeptide: MIETDRIVGGQSLEEDMYVQPTVRPQIITDYIGQQAVREQLQLSINAAKMRQEHLDHVLLYGPPGLGKTTLSNIIAQEMGVTLRQTSGPVIEKPGDLAAILTRLEPHDVLFVDEIHRLSPIVEEVLYPAMEDFQIDIIIGEGPAAQSVKIDIPPFTLVGATTRAGLLTSPLRDRFGIVQRLEFYSIEELAQIVTRSANILGLSAEPDGALEIARRSRGTPRIANRLLRRVRDYAQVKGNGVITAEIADLALNLLEVDPLGLDKMDRRLLELLIQKFESRPVGIDSISAALGEERGTIEDVIEPFLVQQGFLIRTPRGRVVTQTAYRHLGLTMPERNLEDE.

A large ATPase domain (RuvB-L) region spans residues 4–184 (TDRIVGGQSL…FGIVQRLEFY (181 aa)). ATP-binding positions include Arg-24, Gly-65, Lys-68, Thr-69, Thr-70, 131–133 (EDF), Arg-174, Tyr-184, and Arg-221. Position 69 (Thr-69) interacts with Mg(2+). Residues 185–255 (SIEELAQIVT…IADLALNLLE (71 aa)) form a small ATPAse domain (RuvB-S) region. Positions 258-340 (PLGLDKMDRR…TMPERNLEDE (83 aa)) are head domain (RuvB-H). DNA-binding residues include Arg-294, Arg-313, and Arg-318.

It belongs to the RuvB family. Homohexamer. Forms an RuvA(8)-RuvB(12)-Holliday junction (HJ) complex. HJ DNA is sandwiched between 2 RuvA tetramers; dsDNA enters through RuvA and exits via RuvB. An RuvB hexamer assembles on each DNA strand where it exits the tetramer. Each RuvB hexamer is contacted by two RuvA subunits (via domain III) on 2 adjacent RuvB subunits; this complex drives branch migration. In the full resolvosome a probable DNA-RuvA(4)-RuvB(12)-RuvC(2) complex forms which resolves the HJ.

The protein resides in the cytoplasm. It carries out the reaction ATP + H2O = ADP + phosphate + H(+). The RuvA-RuvB-RuvC complex processes Holliday junction (HJ) DNA during genetic recombination and DNA repair, while the RuvA-RuvB complex plays an important role in the rescue of blocked DNA replication forks via replication fork reversal (RFR). RuvA specifically binds to HJ cruciform DNA, conferring on it an open structure. The RuvB hexamer acts as an ATP-dependent pump, pulling dsDNA into and through the RuvAB complex. RuvB forms 2 homohexamers on either side of HJ DNA bound by 1 or 2 RuvA tetramers; 4 subunits per hexamer contact DNA at a time. Coordinated motions by a converter formed by DNA-disengaged RuvB subunits stimulates ATP hydrolysis and nucleotide exchange. Immobilization of the converter enables RuvB to convert the ATP-contained energy into a lever motion, pulling 2 nucleotides of DNA out of the RuvA tetramer per ATP hydrolyzed, thus driving DNA branch migration. The RuvB motors rotate together with the DNA substrate, which together with the progressing nucleotide cycle form the mechanistic basis for DNA recombination by continuous HJ branch migration. Branch migration allows RuvC to scan DNA until it finds its consensus sequence, where it cleaves and resolves cruciform DNA. The sequence is that of Holliday junction branch migration complex subunit RuvB from Hydrogenovibrio crunogenus (strain DSM 25203 / XCL-2) (Thiomicrospira crunogena).